Consider the following 309-residue polypeptide: NAD kinase (309 aa).

D89 (proton acceptor) is an active-site residue. NAD(+) contacts are provided by residues D89–G90, N163–E164, H174, R191, D193, and T204–S209.

It belongs to the NAD kinase family. A divalent metal cation serves as cofactor.

The protein resides in the cytoplasm. The enzyme catalyses NAD(+) + ATP = ADP + NADP(+) + H(+). Its function is as follows. Involved in the regulation of the intracellular balance of NAD and NADP, and is a key enzyme in the biosynthesis of NADP. Catalyzes specifically the phosphorylation on 2'-hydroxyl of the adenosine moiety of NAD to yield NADP. The protein is NAD kinase of Shewanella denitrificans (strain OS217 / ATCC BAA-1090 / DSM 15013).